Here is a 353-residue protein sequence, read N- to C-terminus: Sorbitol dehydrogenase (353 aa).

Residue C45 coordinates Zn(2+). Residue Y51 coordinates substrate. Residues H70 and E71 each contribute to the Zn(2+) site. E156 is a binding site for substrate. NAD(+) contacts are provided by residues V184, D204, R209, 271-273, and 296-298; these read VGL and IFR. Residues R298 and Y299 each contribute to the substrate site.

Belongs to the zinc-containing alcohol dehydrogenase family. As to quaternary structure, homotetramer. It depends on Zn(2+) as a cofactor.

It catalyses the reaction keto-D-fructose + NADH + H(+) = D-sorbitol + NAD(+). It carries out the reaction xylitol + NAD(+) = D-xylulose + NADH + H(+). The catalysed reaction is L-iditol + NAD(+) = keto-L-sorbose + NADH + H(+). Functionally, polyol dehydrogenase that catalyzes the NAD(+)-dependent oxidation of various sugar alcohols. Is mostly active with D-sorbitol (D-glucitol), xylitol and L-iditol as substrates, leading to the C2-oxidized products D-fructose, D-xylulose and L-sorbose, respectively. The polypeptide is Sorbitol dehydrogenase (Bacillus subtilis (strain 168)).